The chain runs to 550 residues: Glucose-6-phosphate isomerase (550 aa).

Catalysis depends on Glu-356, which acts as the Proton donor. Active-site residues include His-387 and Lys-515.

It belongs to the GPI family.

The protein localises to the cytoplasm. It catalyses the reaction alpha-D-glucose 6-phosphate = beta-D-fructose 6-phosphate. It functions in the pathway carbohydrate biosynthesis; gluconeogenesis. The protein operates within carbohydrate degradation; glycolysis; D-glyceraldehyde 3-phosphate and glycerone phosphate from D-glucose: step 2/4. Catalyzes the reversible isomerization of glucose-6-phosphate to fructose-6-phosphate. The chain is Glucose-6-phosphate isomerase from Vibrio cholerae serotype O1 (strain ATCC 39315 / El Tor Inaba N16961).